The sequence spans 566 residues: Chaperonin GroEL 1 (566 aa).

ATP is bound by residues 29–32, 86–90, G413, and D492; these read TIGP and DGTTT. Positions 520-540 are disordered; the sequence is DKPEPPAPAGDGGGDPMGGMG. The span at 529-540 shows a compositional bias: gly residues; the sequence is GDGGGDPMGGMG.

This sequence belongs to the chaperonin (HSP60) family. Forms a cylinder of 14 subunits composed of two heptameric rings stacked back-to-back. Interacts with the co-chaperonin GroES.

The protein resides in the cytoplasm. It catalyses the reaction ATP + H2O + a folded polypeptide = ADP + phosphate + an unfolded polypeptide.. Functionally, together with its co-chaperonin GroES, plays an essential role in assisting protein folding. The GroEL-GroES system forms a nano-cage that allows encapsulation of the non-native substrate proteins and provides a physical environment optimized to promote and accelerate protein folding. The protein is Chaperonin GroEL 1 of Prochlorococcus marinus (strain MIT 9313).